Here is a 555-residue protein sequence, read N- to C-terminus: Glutamine--tRNA ligase (555 aa).

Residues 34 to 44 (PEPNGYLHIGH) carry the 'HIGH' region motif. Residues 35-37 (EPN) and 41-47 (HIGHAKS) contribute to the ATP site. The L-glutamine site is built by D67 and Y212. Residues T231, 261–262 (RL), and 269–271 (MSK) contribute to the ATP site. The short motif at 268–272 (VMSKR) is the 'KMSKS' region element.

Belongs to the class-I aminoacyl-tRNA synthetase family. Monomer.

It is found in the cytoplasm. The catalysed reaction is tRNA(Gln) + L-glutamine + ATP = L-glutaminyl-tRNA(Gln) + AMP + diphosphate. This Cronobacter sakazakii (strain ATCC BAA-894) (Enterobacter sakazakii) protein is Glutamine--tRNA ligase.